The sequence spans 282 residues: Biotin synthase (282 aa).

A Radical SAM core domain is found at 1-228 (MQEIFLCSIS…NARLMVAGGR (228 aa)). The [4Fe-4S] cluster site is built by C17, C21, and C24. [2Fe-2S] cluster contacts are provided by C61, C96, C154, and R221.

Belongs to the radical SAM superfamily. Biotin synthase family. As to quaternary structure, homodimer. The cofactor is [4Fe-4S] cluster. [2Fe-2S] cluster serves as cofactor.

The enzyme catalyses (4R,5S)-dethiobiotin + (sulfur carrier)-SH + 2 reduced [2Fe-2S]-[ferredoxin] + 2 S-adenosyl-L-methionine = (sulfur carrier)-H + biotin + 2 5'-deoxyadenosine + 2 L-methionine + 2 oxidized [2Fe-2S]-[ferredoxin]. It functions in the pathway cofactor biosynthesis; biotin biosynthesis; biotin from 7,8-diaminononanoate: step 2/2. In terms of biological role, catalyzes the conversion of dethiobiotin (DTB) to biotin by the insertion of a sulfur atom into dethiobiotin via a radical-based mechanism. In Helicobacter pylori (strain ATCC 700392 / 26695) (Campylobacter pylori), this protein is Biotin synthase.